The following is a 163-amino-acid chain: 18 kDa protein (163 aa).

The polypeptide is 18 kDa protein (Mus musculus (Mouse)).